Reading from the N-terminus, the 259-residue chain is MSRVSDRVAEKVALISGAARGMGASHAQVLAAHGANVVIADLLEDEGRALAEKINAEFNTGIGRDVALFVHLDVTDYESWTAAVGAAVERFGTLDVLVNNAGIFTRGSVEDADVDEWRRTIEIDLTGNFLGMKAAVPAMKAAGGSIINISSIAGLVGFKNRAAYAAAKWGVQGLTKTSAMDLGPYNIRVNSVHPGSVKTPMTAGLKRGFGQIPLGRDAETQEISDLILFLASDESSFMTGANLAIDGGETAGNNLRQDA.

11 residues coordinate NAD(+): R20, M22, D41, D73, V74, N100, Y164, K168, V197, T199, and T202. Y164 acts as the Proton acceptor in catalysis.

Belongs to the short-chain dehydrogenases/reductases (SDR) family. In terms of assembly, homodimer. Homotetramer.

The enzyme catalyses trans-4-hydroxycyclohexane-1-carboxylate + NAD(+) = 4-oxocyclohexane-1-carboxylate + NADH + H(+). Strongly inhibited by N-bromosuccinimide. Not inhibited by sulfhydryl reagents, such as iodoacetic acid, iodoacetamide, N-ethylmaleimide and p-hydroxymercuribenzoic acid. Functionally, dehydrogenase involved in a cyclohexanecarboxylate (CHCA) degradation pathway. Catalyzes the NAD(+)-dependent dehydrogenation of trans-4-hydroxycyclohexanecarboxylate (trans-4-hydroxyCHCA) to form 4-oxocyclohexanecarboxylate (4-oxoCHCA). Is highly specific for the trans-4-hydroxy derivative and shows only weak activity with cis-4-hydroxyCHCA. Can also catalyze the reverse reaction (4-oxoCHCA reduction) with a higher catalytic efficiency. In the reverse reaction, is highly specific for 4-oxoCHCA and cannot use either the 2-oxo or the 3-oxo homolog as substrate. Cannot use NADP(+). In Sinomonas cyclohexanicum (Corynebacterium cyclohexanicum), this protein is Trans-4-hydroxycyclohexanecarboxylate dehydrogenase.